The primary structure comprises 389 residues: Glutamate 5-kinase (389 aa).

Lysine 16 is an ATP binding site. Positions 56, 143, and 155 each coordinate substrate. 175–176 is a binding site for ATP; sequence SD. A PUA domain is found at 281 to 358; the sequence is AGELHVDEGA…AEIEAILGYA (78 aa).

The protein belongs to the glutamate 5-kinase family.

It localises to the cytoplasm. It catalyses the reaction L-glutamate + ATP = L-glutamyl 5-phosphate + ADP. The protein operates within amino-acid biosynthesis; L-proline biosynthesis; L-glutamate 5-semialdehyde from L-glutamate: step 1/2. Functionally, catalyzes the transfer of a phosphate group to glutamate to form L-glutamate 5-phosphate. This chain is Glutamate 5-kinase, found in Rhizobium etli (strain ATCC 51251 / DSM 11541 / JCM 21823 / NBRC 15573 / CFN 42).